The following is a 359-amino-acid chain: Phosphate acyltransferase (359 aa).

The protein belongs to the PlsX family. In terms of assembly, homodimer. Probably interacts with PlsY.

It is found in the cytoplasm. It catalyses the reaction a fatty acyl-[ACP] + phosphate = an acyl phosphate + holo-[ACP]. The protein operates within lipid metabolism; phospholipid metabolism. Its function is as follows. Catalyzes the reversible formation of acyl-phosphate (acyl-PO(4)) from acyl-[acyl-carrier-protein] (acyl-ACP). This enzyme utilizes acyl-ACP as fatty acyl donor, but not acyl-CoA. This chain is Phosphate acyltransferase, found in Citrobacter koseri (strain ATCC BAA-895 / CDC 4225-83 / SGSC4696).